The following is a 228-amino-acid chain: 7-cyano-7-deazaguanine synthase (228 aa).

Position 9-19 (9-19 (LSGGPDSTTVL)) interacts with ATP. Zn(2+) contacts are provided by cysteine 193, cysteine 203, cysteine 206, and cysteine 209.

Belongs to the QueC family. Zn(2+) is required as a cofactor.

The enzyme catalyses 7-carboxy-7-deazaguanine + NH4(+) + ATP = 7-cyano-7-deazaguanine + ADP + phosphate + H2O + H(+). Its pathway is purine metabolism; 7-cyano-7-deazaguanine biosynthesis. In terms of biological role, catalyzes the ATP-dependent conversion of 7-carboxy-7-deazaguanine (CDG) to 7-cyano-7-deazaguanine (preQ(0)). The sequence is that of 7-cyano-7-deazaguanine synthase from Rickettsia peacockii (strain Rustic).